The sequence spans 476 residues: Probable cytosolic Fe-S cluster assembly factor GJ13047 (476 aa).

Residues cysteine 23, cysteine 68, cysteine 71, cysteine 74, cysteine 187, cysteine 243, cysteine 395, and cysteine 399 each contribute to the [4Fe-4S] cluster site.

It belongs to the NARF family.

In terms of biological role, component of the cytosolic iron-sulfur (Fe/S) protein assembly machinery. Required for maturation of extramitochondrial Fe/S proteins. In Drosophila virilis (Fruit fly), this protein is Probable cytosolic Fe-S cluster assembly factor GJ13047.